Here is a 377-residue protein sequence, read N- to C-terminus: 26S proteasome non-ATPase regulatory subunit 4 (377 aa).

The region spanning 5-188 is the VWFA domain; the sequence is STMVCVDNSE…LADALISSPI (184 aa). A Glycyl lysine isopeptide (Lys-Gly) (interchain with G-Cter in SUMO2) cross-link involves residue K122. Residues 197-262 form an interaction with UBQLN1 region; that stretch reads LGLGASDFEF…TEDSDDALLK (66 aa). The region spanning 211–230 is the UIM 1 domain; it reads SADPELALALRVSMEEQRQR. The segment at 216–220 is essential for ubiquitin-binding; sequence LALAL. A compositionally biased stretch (basic and acidic residues) spans 224–237; sequence MEEQRQRQEEEARR. Residues 224–255 form a disordered region; the sequence is MEEQRQRQEEEARRAAAASAAEAGIATTGTED. Phosphothreonine occurs at positions 250 and 253. 2 positions are modified to phosphoserine: S256 and S266. A UIM 2 domain is found at 282 to 301; the sequence is TEEEQIAYAMQMSLQGAEFG. The essential for ubiquitin-binding stretch occupies residues 287–291; that stretch reads IAYAM. Disordered stretches follow at residues 300-327 and 341-377; these read FGQA…DDYD and NLPG…EDKK. 2 positions are modified to phosphoserine: S358 and S361. Basic and acidic residues predominate over residues 365-377; it reads KDGKKDKKEEDKK.

Belongs to the proteasome subunit S5A family. In terms of assembly, component of the 19S proteasome regulatory particle complex. The 26S proteasome consists of a 20S core particle (CP) and two 19S regulatory subunits (RP). The regulatory particle is made of a lid composed of 9 subunits, a base containing 6 ATPases and few additional components including PSMD4. Interacts with NUB1. Interacts with SQSTM1. Interacts with UBQLN4. Interacts with UBE3A. Interacts with UBQLN1 (via ubiquitin-like domain). Interacts with DDI2.

Its function is as follows. Component of the 26S proteasome, a multiprotein complex involved in the ATP-dependent degradation of ubiquitinated proteins. This complex plays a key role in the maintenance of protein homeostasis by removing misfolded or damaged proteins, which could impair cellular functions, and by removing proteins whose functions are no longer required. Therefore, the proteasome participates in numerous cellular processes, including cell cycle progression, apoptosis, or DNA damage repair. PSMD4 acts as an ubiquitin receptor subunit through ubiquitin-interacting motifs and selects ubiquitin-conjugates for destruction. Displays a preferred selectivity for longer polyubiquitin chains. This chain is 26S proteasome non-ATPase regulatory subunit 4 (PSMD4), found in Homo sapiens (Human).